Consider the following 128-residue polypeptide: Gastrotropin (128 aa).

The residue at position 2 (Ala2) is an N-acetylalanine.

The protein belongs to the calycin superfamily. Fatty-acid binding protein (FABP) family. As to expression, expressed in ovary granulosa and luteal cells.

It is found in the cytoplasm. The protein resides in the membrane. In terms of biological role, binds to bile acids and is involved in enterohepatic bile acid metabolism. Required for efficient apical to basolateral transport of conjugated bile acids in ileal enterocytes. Stimulates gastric acid and pepsinogen secretion. The protein is Gastrotropin (Fabp6) of Mus musculus (Mouse).